The chain runs to 214 residues: 3,4-dihydroxy-2-butanone 4-phosphate synthase (214 aa).

D-ribulose 5-phosphate is bound by residues 37–38, D42, 150–154, and E174; these read RE and RRGHT. E38 is a Mg(2+) binding site. H153 lines the Mg(2+) pocket.

The protein belongs to the DHBP synthase family. In terms of assembly, homodimer. The cofactor is Mg(2+). Mn(2+) is required as a cofactor.

It carries out the reaction D-ribulose 5-phosphate = (2S)-2-hydroxy-3-oxobutyl phosphate + formate + H(+). The protein operates within cofactor biosynthesis; riboflavin biosynthesis; 2-hydroxy-3-oxobutyl phosphate from D-ribulose 5-phosphate: step 1/1. Its function is as follows. Catalyzes the conversion of D-ribulose 5-phosphate to formate and 3,4-dihydroxy-2-butanone 4-phosphate. The chain is 3,4-dihydroxy-2-butanone 4-phosphate synthase from Nitratidesulfovibrio vulgaris (strain ATCC 29579 / DSM 644 / CCUG 34227 / NCIMB 8303 / VKM B-1760 / Hildenborough) (Desulfovibrio vulgaris).